Reading from the N-terminus, the 461-residue chain is Probable protein phosphatase 2C 40 (461 aa).

Residues 34–63 (REASAERASASASAGAGGRERERRPSVAAG) form a disordered region. In terms of domain architecture, PPM-type phosphatase spans 57–321 (RPSVAAGQAC…DDTTCIVIDI (265 aa)). Mn(2+)-binding residues include D98, G99, D273, and D312. The span at 439–453 (KKEAMEGKRHSRDSS) shows a compositional bias: basic and acidic residues. The segment at 439–461 (KKEAMEGKRHSRDSSSRNSGSSE) is disordered.

Belongs to the PP2C family. Requires Mg(2+) as cofactor. Mn(2+) serves as cofactor. As to expression, expressed in leaves, leaf sheaths, panicles, nodes and internodes. Expressed at low levels in roots and stems.

Its subcellular location is the nucleus. It localises to the cytoplasm. The catalysed reaction is O-phospho-L-seryl-[protein] + H2O = L-seryl-[protein] + phosphate. It catalyses the reaction O-phospho-L-threonyl-[protein] + H2O = L-threonyl-[protein] + phosphate. Its function is as follows. Mediates the negative regulation of osmotic and salt stress tolerance through regulation of the jasmonate and abscisic acid signaling pathways and modulation of the raffinose family oligosaccharide metabolism pathway. The polypeptide is Probable protein phosphatase 2C 40 (Oryza sativa subsp. japonica (Rice)).